Reading from the N-terminus, the 252-residue chain is Small ribosomal subunit protein uS3 (252 aa).

The KH type-2 domain maps to 39 to 111 (IRKLINNFAK…EVNLNVLEVK (73 aa)). The segment at 222–252 (KPFASQSSNTPNRRPRNFKGGNNNHVNAKKN) is disordered. Polar residues predominate over residues 241–252 (GGNNNHVNAKKN).

It belongs to the universal ribosomal protein uS3 family. In terms of assembly, part of the 30S ribosomal subunit. Forms a tight complex with proteins S10 and S14.

Its function is as follows. Binds the lower part of the 30S subunit head. Binds mRNA in the 70S ribosome, positioning it for translation. This is Small ribosomal subunit protein uS3 from Phytoplasma sp. (strain STRAWB2).